Consider the following 362-residue polypeptide: Phosphate acyltransferase (362 aa).

A disordered region spans residues Thr-343–Ser-362. The segment covering Lys-344–Ser-356 has biased composition (polar residues).

It belongs to the PlsX family. In terms of assembly, homodimer. Probably interacts with PlsY.

It localises to the cytoplasm. The enzyme catalyses a fatty acyl-[ACP] + phosphate = an acyl phosphate + holo-[ACP]. It participates in lipid metabolism; phospholipid metabolism. Its function is as follows. Catalyzes the reversible formation of acyl-phosphate (acyl-PO(4)) from acyl-[acyl-carrier-protein] (acyl-ACP). This enzyme utilizes acyl-ACP as fatty acyl donor, but not acyl-CoA. In Aster yellows witches'-broom phytoplasma (strain AYWB), this protein is Phosphate acyltransferase.